The sequence spans 42 residues: Large ribosomal subunit protein bL34c (42 aa).

This sequence belongs to the bacterial ribosomal protein bL34 family.

It is found in the plastid. It localises to the chloroplast. This is Large ribosomal subunit protein bL34c (rpl34) from Olisthodiscus luteus (Marine phytoflagellate).